Here is a 396-residue protein sequence, read N- to C-terminus: Elongation factor Tu (396 aa).

In terms of domain architecture, tr-type G spans 10 to 206; that stretch reads KPHINVGTIG…ALDSYIPEPQ (197 aa). A G1 region spans residues 19–26; it reads GHVDHGKT. Residue 19-26 coordinates GTP; sequence GHVDHGKT. Threonine 26 lines the Mg(2+) pocket. Positions 60–64 are G2; the sequence is GITIN. Residues 81-84 are G3; sequence DCPG. GTP is bound by residues 81–85 and 136–139; these read DCPGH and NKAD. The G4 stretch occupies residues 136 to 139; the sequence is NKAD. The tract at residues 174–176 is G5; it reads SAL.

Belongs to the TRAFAC class translation factor GTPase superfamily. Classic translation factor GTPase family. EF-Tu/EF-1A subfamily. As to quaternary structure, monomer.

The protein resides in the cytoplasm. The enzyme catalyses GTP + H2O = GDP + phosphate + H(+). Its function is as follows. GTP hydrolase that promotes the GTP-dependent binding of aminoacyl-tRNA to the A-site of ribosomes during protein biosynthesis. The protein is Elongation factor Tu of Nitrosospira multiformis (strain ATCC 25196 / NCIMB 11849 / C 71).